Here is a 308-residue protein sequence, read N- to C-terminus: Elongation factor Ts (308 aa).

Residues 79–82 are involved in Mg(2+) ion dislocation from EF-Tu; sequence TDFV.

Belongs to the EF-Ts family.

The protein resides in the cytoplasm. Its function is as follows. Associates with the EF-Tu.GDP complex and induces the exchange of GDP to GTP. It remains bound to the aminoacyl-tRNA.EF-Tu.GTP complex up to the GTP hydrolysis stage on the ribosome. In Bdellovibrio bacteriovorus (strain ATCC 15356 / DSM 50701 / NCIMB 9529 / HD100), this protein is Elongation factor Ts.